The sequence spans 205 residues: MAGSYGETFDGKILDDLSGAWVEKHNWSDILRRLTKIKFALQADRDMIPGIVEDLSTEIPVDENTRFPSGKVYHLLTKEMLMAIEAIHAASSFKRRAEEKNNVNPRQRFEAESSSSQLPSGGLVVRPAAGSGDSSLGEDLFSNSKLDDASTAFHKSLATLKGSRPKAVVQRTFEKEYSLRWTAAAPVAAAGGTPPGGRSWTWNLV.

Basic and acidic residues predominate over residues 98-111; it reads EEKNNVNPRQRFEA. The disordered stretch occupies residues 98–130; that stretch reads EEKNNVNPRQRFEAESSSSQLPSGGLVVRPAAG.

It is found in the virion. This is Coat protein from Beta vulgaris (Sugar beet).